The primary structure comprises 426 residues: Enolase (426 aa).

Gln-163 serves as a coordination point for (2R)-2-phosphoglycerate. Residue Glu-205 is the Proton donor of the active site. 3 residues coordinate Mg(2+): Asp-242, Glu-286, and Asp-313. Positions 338, 367, 368, and 389 each coordinate (2R)-2-phosphoglycerate. Lys-338 serves as the catalytic Proton acceptor.

This sequence belongs to the enolase family. Requires Mg(2+) as cofactor.

The protein localises to the cytoplasm. It localises to the secreted. It is found in the cell surface. It carries out the reaction (2R)-2-phosphoglycerate = phosphoenolpyruvate + H2O. Its pathway is carbohydrate degradation; glycolysis; pyruvate from D-glyceraldehyde 3-phosphate: step 4/5. Its function is as follows. Catalyzes the reversible conversion of 2-phosphoglycerate (2-PG) into phosphoenolpyruvate (PEP). It is essential for the degradation of carbohydrates via glycolysis. The protein is Enolase of Helicobacter pylori (strain HPAG1).